The chain runs to 93 residues: Small ribosomal subunit protein uS19 (93 aa).

The protein belongs to the universal ribosomal protein uS19 family.

Its function is as follows. Protein S19 forms a complex with S13 that binds strongly to the 16S ribosomal RNA. In Saccharopolyspora erythraea (strain ATCC 11635 / DSM 40517 / JCM 4748 / NBRC 13426 / NCIMB 8594 / NRRL 2338), this protein is Small ribosomal subunit protein uS19.